The sequence spans 346 residues: Melanoma-associated antigen B3 (346 aa).

Residues 1–35 (MPRGQKSTLHAREKRQQTRGQTQDHQGAQITATNK) form a disordered region. Over residues 18–33 (TRGQTQDHQGAQITAT) the composition is skewed to polar residues. The MAGE domain occupies 111-310 (LIMKTNMLVQ…SAFQFWYEEA (200 aa)).

As to expression, expressed in testis.

This Homo sapiens (Human) protein is Melanoma-associated antigen B3 (MAGEB3).